Here is a 729-residue protein sequence, read N- to C-terminus: Cytoplasmic polyadenylation element-binding protein 4 (729 aa).

Disordered stretches follow at residues 20-49 (FPVR…NNNT) and 78-133 (EKAK…KEKI). The segment covering 24–35 (FHPHLQPPHHHQ) has biased composition (basic residues). Residues 83–96 (QQQEQQDPLEKQQL) show a composition bias toward low complexity. A phosphoserine mark is found at S97, S99, and S137. The interval 218–328 (FGGSFSPQIG…RGLNGGITPL (111 aa)) is disordered. Over residues 232–249 (HHPHHPHFQHHHSQHQQQ) the composition is skewed to basic residues. Residues S252 and S255 each carry the phosphoserine modification. Residues 285–300 (WSSYQSPSPTPSSSWS) are compositionally biased toward low complexity. Residues 301-313 (PGGGGYGGWGGSQ) show a composition bias toward gly residues. Residue T326 is modified to Phosphothreonine. Phosphoserine is present on residues S330 and S332. RRM domains follow at residues 472 to 563 (RKVF…PWNL) and 580 to 662 (KTIF…PYVL). Residues 541–543 (KLY) form an RNA-binding region. C667, C675, C684, C689, C694, C697, H702, and H710 together coordinate Zn(2+).

It belongs to the RRM CPEB family. As to quaternary structure, interacts with TOB1. In terms of tissue distribution, expressed in pancreas in islets and ductal cells (at protein level). Expressed in melanocytes.

The protein resides in the cytoplasm. Its subcellular location is the cell projection. The protein localises to the dendrite. It is found in the dendritic spine. It localises to the postsynaptic density. The protein resides in the axon. Its subcellular location is the growth cone. The protein localises to the endoplasmic reticulum. It is found in the perinuclear region. Its function is as follows. Sequence-specific RNA-binding protein that binds to the cytoplasmic polyadenylation element (CPE), an uridine-rich sequence element (consensus sequence 5'-UUUUUAU-3') within the mRNA 3'-UTR. RNA binding results in a clear conformational change analogous to the Venus fly trap mechanism. Regulates activation of unfolded protein response (UPR) in the process of adaptation to ER stress in liver, by maintaining translation of CPE-regulated mRNAs in conditions in which global protein synthesis is inhibited. Required for cell cycle progression, specifically for cytokinesis and chromosomal segregation. Plays a role as an oncogene promoting tumor growth and progression by positively regulating translation of t-plasminogen activator/PLAT. Stimulates proliferation of melanocytes. In contrast to CPEB1 and CPEB3, does not play role in synaptic plasticity, learning and memory. This is Cytoplasmic polyadenylation element-binding protein 4 (CPEB4) from Homo sapiens (Human).